The following is a 203-amino-acid chain: Imidazoleglycerol-phosphate dehydratase (203 aa).

It belongs to the imidazoleglycerol-phosphate dehydratase family.

It localises to the cytoplasm. The catalysed reaction is D-erythro-1-(imidazol-4-yl)glycerol 3-phosphate = 3-(imidazol-4-yl)-2-oxopropyl phosphate + H2O. It functions in the pathway amino-acid biosynthesis; L-histidine biosynthesis; L-histidine from 5-phospho-alpha-D-ribose 1-diphosphate: step 6/9. This chain is Imidazoleglycerol-phosphate dehydratase, found in Salinispora tropica (strain ATCC BAA-916 / DSM 44818 / JCM 13857 / NBRC 105044 / CNB-440).